The primary structure comprises 358 residues: Uroporphyrinogen decarboxylase (358 aa).

Substrate contacts are provided by residues 29–33, Asp79, Tyr155, Ser210, and His330; that span reads RQAGR.

It belongs to the uroporphyrinogen decarboxylase family. In terms of assembly, homodimer.

It localises to the cytoplasm. It catalyses the reaction uroporphyrinogen III + 4 H(+) = coproporphyrinogen III + 4 CO2. Its pathway is porphyrin-containing compound metabolism; protoporphyrin-IX biosynthesis; coproporphyrinogen-III from 5-aminolevulinate: step 4/4. In terms of biological role, catalyzes the decarboxylation of four acetate groups of uroporphyrinogen-III to yield coproporphyrinogen-III. The sequence is that of Uroporphyrinogen decarboxylase from Bordetella petrii (strain ATCC BAA-461 / DSM 12804 / CCUG 43448).